The chain runs to 197 residues: Holliday junction branch migration complex subunit RuvA (197 aa).

The tract at residues 1–64 is domain I; it reads MIGRISGLLL…EDAHLLFGFA (64 aa). The tract at residues 65 to 142 is domain II; sequence TEGERQAFRQ…DLGVSAIPGA (78 aa). The segment at 143-153 is flexible linker; that stretch reads AGARRPSTMGS. A domain III region spans residues 153 to 197; sequence SDVLNALLSLGYNDREANWAVSQLSVDLSVSDGIRQALKFLSKEK.

The protein belongs to the RuvA family. In terms of assembly, homotetramer. Forms an RuvA(8)-RuvB(12)-Holliday junction (HJ) complex. HJ DNA is sandwiched between 2 RuvA tetramers; dsDNA enters through RuvA and exits via RuvB. An RuvB hexamer assembles on each DNA strand where it exits the tetramer. Each RuvB hexamer is contacted by two RuvA subunits (via domain III) on 2 adjacent RuvB subunits; this complex drives branch migration. In the full resolvosome a probable DNA-RuvA(4)-RuvB(12)-RuvC(2) complex forms which resolves the HJ.

The protein localises to the cytoplasm. The RuvA-RuvB-RuvC complex processes Holliday junction (HJ) DNA during genetic recombination and DNA repair, while the RuvA-RuvB complex plays an important role in the rescue of blocked DNA replication forks via replication fork reversal (RFR). RuvA specifically binds to HJ cruciform DNA, conferring on it an open structure. The RuvB hexamer acts as an ATP-dependent pump, pulling dsDNA into and through the RuvAB complex. HJ branch migration allows RuvC to scan DNA until it finds its consensus sequence, where it cleaves and resolves the cruciform DNA. In Nitrosospira multiformis (strain ATCC 25196 / NCIMB 11849 / C 71), this protein is Holliday junction branch migration complex subunit RuvA.